The primary structure comprises 374 residues: Histidinol-phosphate aminotransferase (374 aa).

Lys-211 carries the N6-(pyridoxal phosphate)lysine modification. The span at 351 to 368 (GNSSQDSASKSNSSANND) shows a compositional bias: low complexity. Positions 351 to 374 (GNSSQDSASKSNSSANNDELNASN) are disordered.

The protein belongs to the class-II pyridoxal-phosphate-dependent aminotransferase family. Histidinol-phosphate aminotransferase subfamily. Homodimer. It depends on pyridoxal 5'-phosphate as a cofactor.

It carries out the reaction L-histidinol phosphate + 2-oxoglutarate = 3-(imidazol-4-yl)-2-oxopropyl phosphate + L-glutamate. Its pathway is amino-acid biosynthesis; L-histidine biosynthesis; L-histidine from 5-phospho-alpha-D-ribose 1-diphosphate: step 7/9. This Photobacterium profundum (strain SS9) protein is Histidinol-phosphate aminotransferase.